The primary structure comprises 142 residues: MKTFTAKKETVERDWYLVNADGKTLGRLATELARRLRGKHKPEYTPHVDTGDYLIVINAEKISVTGKKRKDKIYYRHTGYVGGIKQTTFEEMIARHPERVIEIAVKGMLPKGPLGRAMYRKLKVYKGATHHHIAQQPKVLNI.

This sequence belongs to the universal ribosomal protein uL13 family. In terms of assembly, part of the 50S ribosomal subunit.

Its function is as follows. This protein is one of the early assembly proteins of the 50S ribosomal subunit, although it is not seen to bind rRNA by itself. It is important during the early stages of 50S assembly. The protein is Large ribosomal subunit protein uL13 of Hamiltonella defensa subsp. Acyrthosiphon pisum (strain 5AT).